The primary structure comprises 513 residues: GMP synthase [glutamine-hydrolyzing] (513 aa).

The Glutamine amidotransferase type-1 domain maps to 5-195 (LVLVIDFGGQ…VYNICGCTGD (191 aa)). Cys-82 serves as the catalytic Nucleophile. Catalysis depends on residues His-169 and Glu-171. The GMPS ATP-PPase domain maps to 196–388 (WKMDSFVEKT…LGIPEKLVFR (193 aa)). 223–229 (SGGVDSS) contacts ATP.

As to quaternary structure, homodimer.

The catalysed reaction is XMP + L-glutamine + ATP + H2O = GMP + L-glutamate + AMP + diphosphate + 2 H(+). It functions in the pathway purine metabolism; GMP biosynthesis; GMP from XMP (L-Gln route): step 1/1. Catalyzes the synthesis of GMP from XMP. The chain is GMP synthase [glutamine-hydrolyzing] from Clostridium botulinum (strain Alaska E43 / Type E3).